The chain runs to 78 residues: Mitochondrial import inner membrane translocase subunit Tim9 (78 aa).

The short motif at 24 to 48 (CFTSCVNEFGSRTVNAKEESCANNC) is the Twin CX3C motif element. Disulfide bonds link cysteine 24–cysteine 48 and cysteine 28–cysteine 44.

The protein belongs to the small Tim family. Heterohexamer; composed of 3 copies of tim-9/tin-9.1 and 3 copies of tim-10/tin-10, named soluble 70 kDa complex. The complex associates with the tim-22 component of the TIM22 complex. Interacts with multi-pass transmembrane proteins in transit.

It localises to the mitochondrion inner membrane. In terms of biological role, mitochondrial intermembrane chaperone that participates in the import and insertion of multi-pass transmembrane proteins into the mitochondrial inner membrane. May also be required for the transfer of beta-barrel precursors from the TOM complex to the sorting and assembly machinery (SAM complex) of the outer membrane. Acts as a chaperone-like protein that protects the hydrophobic precursors from aggregation and guide them through the mitochondrial intermembrane space. The protein is Mitochondrial import inner membrane translocase subunit Tim9 (tin-9.1) of Caenorhabditis briggsae.